A 629-amino-acid chain; its full sequence is Probable potassium transport system protein Kup 3 (629 aa).

Helical transmembrane passes span Leu-20–Phe-40, Val-54–Val-74, Pro-106–Thr-126, Pro-143–Ile-163, Ile-171–Ala-191, Phe-212–Thr-232, Trp-253–Leu-273, Phe-291–Ile-311, Ile-343–Phe-363, Ala-372–Leu-392, Ile-400–Ala-420, and Phe-425–Ile-445.

This sequence belongs to the HAK/KUP transporter (TC 2.A.72) family.

It localises to the cell inner membrane. It catalyses the reaction K(+)(in) + H(+)(in) = K(+)(out) + H(+)(out). Functionally, transport of potassium into the cell. Likely operates as a K(+):H(+) symporter. The sequence is that of Probable potassium transport system protein Kup 3 from Legionella pneumophila (strain Corby).